The chain runs to 217 residues: 3,4-dihydroxy-2-butanone 4-phosphate synthase (217 aa).

Residues 37-38 (RE), Asp42, 150-154 (RRGHT), and Glu174 contribute to the D-ribulose 5-phosphate site. Glu38 is a Mg(2+) binding site. His153 contacts Mg(2+).

It belongs to the DHBP synthase family. As to quaternary structure, homodimer. Requires Mg(2+) as cofactor. Mn(2+) is required as a cofactor.

It carries out the reaction D-ribulose 5-phosphate = (2S)-2-hydroxy-3-oxobutyl phosphate + formate + H(+). It functions in the pathway cofactor biosynthesis; riboflavin biosynthesis; 2-hydroxy-3-oxobutyl phosphate from D-ribulose 5-phosphate: step 1/1. In terms of biological role, catalyzes the conversion of D-ribulose 5-phosphate to formate and 3,4-dihydroxy-2-butanone 4-phosphate. This chain is 3,4-dihydroxy-2-butanone 4-phosphate synthase, found in Shewanella putrefaciens (strain CN-32 / ATCC BAA-453).